A 207-amino-acid chain; its full sequence is dTTP/UTP pyrophosphatase (207 aa).

The active-site Proton acceptor is the Asp-87.

Belongs to the Maf family. YhdE subfamily. Requires a divalent metal cation as cofactor.

The protein localises to the cytoplasm. It carries out the reaction dTTP + H2O = dTMP + diphosphate + H(+). The enzyme catalyses UTP + H2O = UMP + diphosphate + H(+). Nucleoside triphosphate pyrophosphatase that hydrolyzes dTTP and UTP. May have a dual role in cell division arrest and in preventing the incorporation of modified nucleotides into cellular nucleic acids. This is dTTP/UTP pyrophosphatase from Bordetella pertussis (strain Tohama I / ATCC BAA-589 / NCTC 13251).